The primary structure comprises 98 residues: Large ribosomal subunit protein mL53 (98 aa).

Belongs to the mitochondrion-specific ribosomal protein mL53 family. As to quaternary structure, component of the mitochondrial large ribosomal subunit (mt-LSU). Mature N.crassa 74S mitochondrial ribosomes consist of a small (37S) and a large (54S) subunit. The 37S small subunit contains a 16S ribosomal RNA (16S mt-rRNA) and 32 different proteins. The 54S large subunit contains a 23S rRNA (23S mt-rRNA) and 42 different proteins.

It localises to the mitochondrion. Component of the mitochondrial ribosome (mitoribosome), a dedicated translation machinery responsible for the synthesis of mitochondrial genome-encoded proteins, including at least some of the essential transmembrane subunits of the mitochondrial respiratory chain. The mitoribosomes are attached to the mitochondrial inner membrane and translation products are cotranslationally integrated into the membrane. This chain is Large ribosomal subunit protein mL53 (mrpl44), found in Neurospora crassa (strain ATCC 24698 / 74-OR23-1A / CBS 708.71 / DSM 1257 / FGSC 987).